A 41-amino-acid polypeptide reads, in one-letter code: GVDKAGCRYMFGGCSVNDDCCPRLGCHSLFSYCAWDLTFSD.

3 disulfides stabilise this stretch: C7/C21, C14/C26, and C20/C33.

This sequence belongs to the neurotoxin 10 (Hwtx-1) family. 56 (SNX-482) subfamily. In terms of tissue distribution, expressed by the venom gland.

Its subcellular location is the secreted. Toxin that blocks vertebrate P/Q-type (Cav2.1/CACNA1A) and R-type (Cav2.3/CACNA1E) voltage-gated calcium channels. Also inhibits sodium channels (Nav) in bovine chromaffin cells by delaying sodium channel inactivation. The chain is Omega-theraphotoxin-Hg1a from Hysterocrates gigas (Cameroon red baboon tarantula).